A 38-amino-acid polypeptide reads, in one-letter code: Plastocyanin (38 aa).

Residues 1 to 38 enclose the Plastocyanin-like domain; sequence AQTVEVKMGADGGLLVFEPAKAGPHNVVFDEDNIPPGV. His25 provides a ligand contact to Cu cation.

It belongs to the plastocyanin family. Cu(2+) serves as cofactor.

Its subcellular location is the plastid. The protein resides in the chloroplast thylakoid membrane. In terms of biological role, participates in electron transfer between P700 and the cytochrome b6-f complex in photosystem I. The polypeptide is Plastocyanin (PETE) (Thalassiosira oceanica (Marine diatom)).